Reading from the N-terminus, the 202-residue chain is Translation initiation factor 2 subunit beta (202 aa).

Residues 145–202 (AIEEGGTYELRIDAVGSKGDGIAKIDKYTVFVPGATKGDVVKVKIKKISGNLAFSERA) enclose the TRAM domain.

Belongs to the eIF-2-beta/eIF-5 family. As to quaternary structure, heterotrimer composed of an alpha, a beta and a gamma chain.

Functionally, eIF-2 functions in the early steps of protein synthesis by forming a ternary complex with GTP and initiator tRNA. The polypeptide is Translation initiation factor 2 subunit beta (eif2b) (Methanosarcina mazei (strain ATCC BAA-159 / DSM 3647 / Goe1 / Go1 / JCM 11833 / OCM 88) (Methanosarcina frisia)).